The chain runs to 141 residues: Ribonuclease VapC38 (141 aa).

Mg(2+)-binding residues include Asp5 and Asp102.

The protein belongs to the PINc/VapC protein family. It depends on Mg(2+) as a cofactor.

Its subcellular location is the secreted. Its function is as follows. Toxic component of a type II toxin-antitoxin (TA) system. An RNase. Its cognate antitoxin is VapB38. This chain is Ribonuclease VapC38, found in Mycobacterium tuberculosis (strain ATCC 25618 / H37Rv).